Here is a 366-residue protein sequence, read N- to C-terminus: 3-isopropylmalate dehydrogenase (366 aa).

78-91 contributes to the NAD(+) binding site; it reads GPKWEDLPSHLQPE. Substrate-binding residues include arginine 99, arginine 109, arginine 138, and aspartate 227. 3 residues coordinate Mg(2+): aspartate 227, aspartate 251, and aspartate 255. Residue 285-297 participates in NAD(+) binding; sequence GSAPDIKGKNIAN.

Belongs to the isocitrate and isopropylmalate dehydrogenases family. LeuB type 1 subfamily. Homodimer. The cofactor is Mg(2+). Mn(2+) serves as cofactor.

It localises to the cytoplasm. The catalysed reaction is (2R,3S)-3-isopropylmalate + NAD(+) = 4-methyl-2-oxopentanoate + CO2 + NADH. It participates in amino-acid biosynthesis; L-leucine biosynthesis; L-leucine from 3-methyl-2-oxobutanoate: step 3/4. Functionally, catalyzes the oxidation of 3-carboxy-2-hydroxy-4-methylpentanoate (3-isopropylmalate) to 3-carboxy-4-methyl-2-oxopentanoate. The product decarboxylates to 4-methyl-2 oxopentanoate. This Buchnera aphidicola subsp. Baizongia pistaciae (strain Bp) protein is 3-isopropylmalate dehydrogenase.